The primary structure comprises 361 residues: S-adenosylmethionine-dependent nucleotide dehydratase RSAD2 (361 aa).

One can recognise a Radical SAM core domain in the interval 69–289 (PTTPTSVNYH…LERHKEVSCL (221 aa)). The [4Fe-4S] cluster site is built by C83, C87, and C90. An N6-acetyllysine modification is found at K197. Residue K206 forms a Glycyl lysine isopeptide (Lys-Gly) (interchain with G-Cter in ubiquitin) linkage.

The protein belongs to the radical SAM superfamily. RSAD2 family. In terms of assembly, homodimer. Interacts with IRAK1 and TRAF6. Interacts with FPPS. Interacts with HADHB. Interacts (via C-terminus) with VAPA/VAP33 (via C-terminus). As to quaternary structure, (Microbial infection) Interacts with human cytomegalovirus/HHV-5 protein vMIA/UL37; this interaction results in RSAD2/viperin relocalization from the endoplasmic reticulum to the mitochondria. (Microbial infection) Interacts (via N-terminus) with enterovirus A71 protein 2C; this interaction inhibits viral replication. In terms of assembly, (Microbial infection) Interacts with herpes simplex virus 1/HHV-1 glycoprotein D; this interaction inhibits HHV-1 replication by facilitating IRF7-mediated IFN-beta production. Requires [4Fe-4S] cluster as cofactor. Post-translationally, acetylated by HAT1. HAT1-mediated acetylation of Lys-197 in turn recruits UBE4A that stimulates RSAD2 polyubiquitination leading to proteasomal degradation. In terms of processing, 'Lys-6'-linked polyubiquitination at Lys-206 leads to RSAD2 protein degradation.

It is found in the endoplasmic reticulum membrane. Its subcellular location is the golgi apparatus. The protein resides in the endoplasmic reticulum. The protein localises to the lipid droplet. It localises to the mitochondrion. It is found in the mitochondrion inner membrane. Its subcellular location is the mitochondrion outer membrane. The enzyme catalyses CTP + AH2 + S-adenosyl-L-methionine = 3'-deoxy-3',4'-didehydro-CTP + 5'-deoxyadenosine + L-methionine + A + H2O + H(+). Its activity is regulated as follows. IRAK1 and TRAF6 synergistically activate RSAD2 increasing its activity with CTP as substrate about 10-fold. Its function is as follows. Interferon-inducible antiviral protein which plays a major role in the cell antiviral state induced by type I and type II interferon. Catalyzes the conversion of cytidine triphosphate (CTP) to 3'-deoxy-3',4'-didehydro-CTP (ddhCTP) via a SAM-dependent radical mechanism. In turn, ddhCTP acts as a chain terminator for the RNA-dependent RNA polymerases from multiple viruses and directly inhibits viral replication. Therefore, inhibits a wide range of DNA and RNA viruses, including human cytomegalovirus (HCMV), hepatitis C virus (HCV), west Nile virus (WNV), dengue virus, sindbis virus, influenza A virus, sendai virus, vesicular stomatitis virus (VSV), zika virus, and human immunodeficiency virus (HIV-1). Also promotes TLR7 and TLR9-dependent production of IFN-beta production in plasmacytoid dendritic cells (pDCs) by facilitating 'Lys-63'-linked ubiquitination of IRAK1 by TRAF6. Plays a role in CD4+ T-cells activation and differentiation. Facilitates T-cell receptor (TCR)-mediated GATA3 activation and optimal T-helper 2 (Th2) cytokine production by modulating NFKB1 and JUNB activities. Can inhibit secretion of soluble proteins. The polypeptide is S-adenosylmethionine-dependent nucleotide dehydratase RSAD2 (Homo sapiens (Human)).